A 247-amino-acid polypeptide reads, in one-letter code: 2,3-bisphosphoglycerate-dependent phosphoglycerate mutase (247 aa).

Substrate contacts are provided by residues R8–N15, T21–G22, R60, E87–Y90, K98, R114–R115, and G183–N184. H9 functions as the Tele-phosphohistidine intermediate in the catalytic mechanism. Catalysis depends on E87, which acts as the Proton donor/acceptor.

Belongs to the phosphoglycerate mutase family. BPG-dependent PGAM subfamily. Homodimer.

It catalyses the reaction (2R)-2-phosphoglycerate = (2R)-3-phosphoglycerate. It functions in the pathway carbohydrate degradation; glycolysis; pyruvate from D-glyceraldehyde 3-phosphate: step 3/5. Catalyzes the interconversion of 2-phosphoglycerate and 3-phosphoglycerate. The sequence is that of 2,3-bisphosphoglycerate-dependent phosphoglycerate mutase from Paracidovorax citrulli (strain AAC00-1) (Acidovorax citrulli).